Consider the following 552-residue polypeptide: MTGFARFAELCERISQTSGSLEKTDILASFLSDLESDDLRIVAGFVMGVVIPGTELGVGPSLLYESISRATGLSSDAVNELLRATGDPGLVAYRAVERRKPLTLAAFSGSEGLEVQDVYQRFLSIAKASGRGSQEIRVKNLQYMFSEASPLEAKYIARLAMEDMRIGVGEGLVRDAIAKAFGVSKEDVERAYNLTNDLGLVAEYAKLGRLNELGISINRPIKMMLAQIGESIEASLAEGATAVEWKFDGARVQIHKDKGNVRIFSRRLEDVTSSLPEIREIVRGHVRARTAILDGEAVATGEDGRPLPFQEILRRFRRKYGVARTAKTIPLKLHLFDIIYMDGASLLDEPLEERRRVLVSVADPEIIAEQVVTSDVHRVEEIYREALAAGHEGVMLKNPSSTYTPGKRGKNWLKIKPLLESLDLVVIGARWGEGKRANLLGSYRLACIDTDTGELKDVGWVATGITDEMLAELTELFRELIVKENGMEVEVHPEIVFEVGYEEIQRSPNYSSGYALRFPRLIAVRDDKSPSEADTLERIGEIYRLQRGRSKK.

Glu-244 lines the ATP pocket. Catalysis depends on Lys-246, which acts as the N6-AMP-lysine intermediate. 6 residues coordinate ATP: Arg-251, Arg-266, Glu-296, Phe-336, Arg-408, and Lys-414.

This sequence belongs to the ATP-dependent DNA ligase family. Mg(2+) serves as cofactor.

It carries out the reaction ATP + (deoxyribonucleotide)n-3'-hydroxyl + 5'-phospho-(deoxyribonucleotide)m = (deoxyribonucleotide)n+m + AMP + diphosphate.. DNA ligase that seals nicks in double-stranded DNA during DNA replication, DNA recombination and DNA repair. The polypeptide is DNA ligase (Methanothrix thermoacetophila (strain DSM 6194 / JCM 14653 / NBRC 101360 / PT) (Methanosaeta thermophila)).